A 622-amino-acid polypeptide reads, in one-letter code: Auxin response factor 11 (622 aa).

Residues 145–247 (FVKILTASDT…DLRVGVRRLA (103 aa)) constitute a DNA-binding region (TF-B3). Disordered regions lie at residues 358 to 398 (SIQR…ISEI) and 483 to 513 (SNIS…TRSR). 2 stretches are compositionally biased toward polar residues: residues 376–387 (SALTPTPTQQQS) and 483–511 (SNIS…TSTR). In terms of domain architecture, PB1 spans 511 to 594 (RSRIKVQMQG…KKLFIYPSDE (84 aa)).

It belongs to the ARF family. As to quaternary structure, homodimers and heterodimers.

The protein resides in the nucleus. Functionally, auxin response factors (ARFs) are transcriptional factors that bind specifically to the DNA sequence 5'-TGTCTC-3' found in the auxin-responsive promoter elements (AuxREs). Could act as transcriptional activator or repressor. Formation of heterodimers with Aux/IAA proteins may alter their ability to modulate early auxin response genes expression. The protein is Auxin response factor 11 (ARF11) of Arabidopsis thaliana (Mouse-ear cress).